We begin with the raw amino-acid sequence, 361 residues long: Phosphoribosylformylglycinamidine cyclo-ligase (361 aa).

It belongs to the AIR synthase family.

It localises to the cytoplasm. The catalysed reaction is 2-formamido-N(1)-(5-O-phospho-beta-D-ribosyl)acetamidine + ATP = 5-amino-1-(5-phospho-beta-D-ribosyl)imidazole + ADP + phosphate + H(+). It participates in purine metabolism; IMP biosynthesis via de novo pathway; 5-amino-1-(5-phospho-D-ribosyl)imidazole from N(2)-formyl-N(1)-(5-phospho-D-ribosyl)glycinamide: step 2/2. In Bartonella henselae (strain ATCC 49882 / DSM 28221 / CCUG 30454 / Houston 1) (Rochalimaea henselae), this protein is Phosphoribosylformylglycinamidine cyclo-ligase.